The following is a 463-amino-acid chain: MGLSLVLSCGVIAGISGFLFGYDSGIMTTTIAQEQFLQQFKPKESMVGTIVAIMQAGGFFGCLTAGKLSDLWGRRKAIMFGCVFVVVGGALQAAAYHTAMLLIGRLVTGFGVGSLTMTVPVYQAEISPPRWRGTIVGCQQLMLAIGSAIANWTGYGCSFVNSSFQWRMPLALQAVPGIVLFFGSYFLPESPRWLVEHDALDAALHVVQRLYPDKQNLDSAYAEFQEIVEQIKQEKAQASERSYLQIFRRKAWRKRLFLGAGIWLMLNLTGINVINYYLTQFFTSLGYKGRRAIFLSGVYGSVGAATTFLALFFVHRLSRKTPLMMANISQTATLIVMAGLTAASELGKSGQMGGVAMIFLFFVIYCSTWGPLSWVYASEIFPTQIRSKGYSMASAVNCEWRFYFLFVATNFISALVLLFLYPETSGKSLEAIDLLFDDHQTIHRSTLEENEVRRTSESVNAKH.

The next 11 membrane-spanning stretches (helical) occupy residues 5–27, 46–66, 83–103, 106–126, 141–161, 168–188, 256–276, 293–313, 323–343, 355–375, and 402–422; these read LVLS…SGIM, MVGT…LTAG, VFVV…MLLI, LVTG…QAEI, LMLA…SFVN, MPLA…YFLP, LFLG…VINY, IFLS…ALFF, LMMA…LTAA, VAMI…LSWV, and FYFL…FLYP.

The protein belongs to the major facilitator superfamily. Sugar transporter (TC 2.A.1.1) family.

It is found in the membrane. MFS-type transporter; part of the gene cluster that mediates the biosynthesis of echinulin family alkaloid. The polypeptide is MFS-type transporter criB (Aspergillus cristatus (Chinese Fuzhuan brick tea-fermentation fungus)).